Reading from the N-terminus, the 1071-residue chain is Exportin-1 (1071 aa).

Residues 1-679 (MPAIMTMLAD…QQATKNVDIL (679 aa)) form a necessary for HTLV-1 Rex-mediated mRNA export region. Positions 46-112 (AQEVLTHLKE…KKYVVGLIIK (67 aa)) constitute an Importin N-terminal domain. 6 HEAT repeats span residues 217-240 (QNAP…PLGY), 241-277 (IFET…VSVS), 354-472 (MLLV…YVDT), 515-553 (RFLV…QYPR), 560-597 (KFLK…KCRR), and 602-639 (VQVG…AVGY). Residues 327–450 (CTFLKEHDQL…VREFMKDTDS (124 aa)) are interaction with Ran and nuclear export complex formation. Ser-391 bears the Phosphoserine mark. The segment at 411-414 (PMLF) is necessary for HTLV-1 Rex multimerization. The interval 411 to 481 (PMLFKVRLLM…TERIMTEKLH (71 aa)) is interaction with RANBP3. At Lys-446 the chain carries N6-acetyllysine. Phosphothreonine is present on Thr-448. A Phosphoserine modification is found at Ser-450. Tyr-454 carries the phosphotyrosine modification. Lys-693 is modified (N6-acetyllysine). 4 HEAT repeats span residues 775-813 (NFVP…KLGG), 885-916 (TMRN…SFYQ), 917-954 (TYFC…NLVE), and 1002-1039 (FSLN…EERE). Residues 800 to 820 (VLSTMAIIVNKLGGHITAEIP) are interaction with HIV-1 Rev. At Ser-1031 the chain carries Phosphoserine.

The protein belongs to the exportin family. As to quaternary structure, found in a U snRNA export complex with PHAX/RNUXA, NCBP1/CBP80, NCBP2/CBP20, RAN, XPO1 and m7G-capped RNA. Component of a nuclear export receptor complex composed of KPNB1, RAN, SNUPN and XPO1. Found in a trimeric export complex with SNUPN, RAN and XPO1. Found in a nuclear export complex with RANBP3 and RAN. Found in a 60S ribosomal subunit export complex with NMD3, RAN, XPO1. Interacts with DDX3X, NMD3, NUP42, NUP88, NUP214, RANBP3 and TERT. Interacts with NEMF (via its N-terminus). Interacts with the monomeric form of BIRC5/survivin deacetylated at 'Lys-129'. Interacts with DTNBP1 and SERTAD2; the interactions translocate DTNBP1 and SERTAD2 out of the nucleus. Interacts with ATF2. Interacts with SLC35G1 and STIM1. Interacts with DCAF8. Interacts with CPEB3. Interacts with HAX1. Interacts with BOK; translocates to the cytoplasm. Interacts with HSP90AB1. Interacts with LRPPRC; interacts with LRPPRC alone and also when LRPPRC is in complex with EIF4E and with EIF4E sensitivity element (4ESE)-containing mRNAs to form an EIF4E-dependent mRNA export complex. (Microbial infection) Interacts with HIV-1 Rev. In terms of assembly, (Microbial infection) Interacts with HTLV-1 Rex. As to quaternary structure, (Microbial infection) Interacts with influenza A nucleoprotein. (Microbial infection) Interacts with Epstein-Barr virus protein BMLF1. In terms of assembly, (Microbial infection) Part of a tetrameric complex composed of CRM1, importin alpha/beta dimer and the Venezuelan equine encephalitis virus (VEEV) capsid; this complex blocks the receptor-mediated transport through the nuclear pore. As to quaternary structure, (Microbial infection) Interacts with SARS-CoV virus protein ORF9b; this interaction mediates protein ORF9b export out of the nucleus. Expressed in heart, brain, placenta, lung, liver, skeletal muscle, pancreas, spleen, thymus, prostate, testis, ovary, small intestine, colon and peripheral blood leukocytes. Not expressed in the kidney.

The protein resides in the cytoplasm. Its subcellular location is the nucleus. It localises to the nucleoplasm. It is found in the cajal body. The protein localises to the nucleolus. Functionally, mediates the nuclear export of cellular proteins (cargos) bearing a leucine-rich nuclear export signal (NES) and of RNAs. In the nucleus, in association with RANBP3, binds cooperatively to the NES on its target protein and to the GTPase RAN in its active GTP-bound form (Ran-GTP). Docking of this complex to the nuclear pore complex (NPC) is mediated through binding to nucleoporins. Upon transit of a nuclear export complex into the cytoplasm, disassembling of the complex and hydrolysis of Ran-GTP to Ran-GDP (induced by RANBP1 and RANGAP1, respectively) cause release of the cargo from the export receptor. The directionality of nuclear export is thought to be conferred by an asymmetric distribution of the GTP- and GDP-bound forms of Ran between the cytoplasm and nucleus. Involved in U3 snoRNA transport from Cajal bodies to nucleoli. Binds to late precursor U3 snoRNA bearing a TMG cap. Its function is as follows. (Microbial infection) Mediates the export of unspliced or incompletely spliced RNAs out of the nucleus from different viruses including HIV-1, HTLV-1 and influenza A. Interacts with, and mediates the nuclear export of HIV-1 Rev and HTLV-1 Rex proteins. Involved in HTLV-1 Rex multimerization. This chain is Exportin-1 (XPO1), found in Homo sapiens (Human).